Here is a 1209-residue protein sequence, read N- to C-terminus: Sterol 3-beta-glucosyltransferase (1209 aa).

Residues 167–217 enclose the GRAM 1 domain; sequence ERLIKKFLPNDDEKYIEEYPCWLLRDIMIQGHAYLTNKHLFFFAFIPNFES. In terms of domain architecture, PH spans 218 to 315; the sequence is DFNVTGSLRL…WVSSIKKQMF (98 aa). The 67-residue stretch at 568–634 folds into the GRAM 2 domain; that stretch reads VRFRQHFSFD…EDVENCYKET (67 aa). UDP-alpha-D-glucose contacts are provided by Ser745, Arg746, Asp748, Asn1019, Val1048, His1050, His1063, Ser1066, Gly1067, Thr1068, Asp1087, and Gln1088. Residues 1186–1209 form a disordered region; that stretch reads AKGNEKEEYSSEGSGSNDGSWLLI. Residues 1196 to 1209 are compositionally biased toward low complexity; it reads SEGSGSNDGSWLLI.

It belongs to the glycosyltransferase 28 family.

It is found in the cytoplasm. It localises to the membrane. The enzyme catalyses a sterol + UDP-alpha-D-glucose = a sterol 3-beta-D-glucoside + UDP + H(+). It carries out the reaction ergosterol + UDP-alpha-D-glucose = ergosteryl 3-beta-D-glucoside + UDP + H(+). Sterol glycosyltransferase responsible for the glycosylation of ergosterol to form ergosterol-glucoside. The chain is Sterol 3-beta-glucosyltransferase from Kluyveromyces lactis (strain ATCC 8585 / CBS 2359 / DSM 70799 / NBRC 1267 / NRRL Y-1140 / WM37) (Yeast).